Reading from the N-terminus, the 513-residue chain is ATP synthase subunit alpha (513 aa).

169–176 (GDRQTGKT) serves as a coordination point for ATP.

Belongs to the ATPase alpha/beta chains family. F-type ATPases have 2 components, CF(1) - the catalytic core - and CF(0) - the membrane proton channel. CF(1) has five subunits: alpha(3), beta(3), gamma(1), delta(1), epsilon(1). CF(0) has three main subunits: a(1), b(2) and c(9-12). The alpha and beta chains form an alternating ring which encloses part of the gamma chain. CF(1) is attached to CF(0) by a central stalk formed by the gamma and epsilon chains, while a peripheral stalk is formed by the delta and b chains.

It is found in the cell inner membrane. It carries out the reaction ATP + H2O + 4 H(+)(in) = ADP + phosphate + 5 H(+)(out). Produces ATP from ADP in the presence of a proton gradient across the membrane. The alpha chain is a regulatory subunit. In Shigella boydii serotype 18 (strain CDC 3083-94 / BS512), this protein is ATP synthase subunit alpha.